Here is a 25-residue protein sequence, read N- to C-terminus: Small ribosomal subunit protein eS32A (25 aa).

Residues 1–25 (MRDKWRKKRVRRLKRKRRKMRARSK) form a disordered region.

The protein belongs to the eukaryotic ribosomal protein eS32 family. In terms of assembly, component of the large ribosomal subunit (LSU). Mature yeast ribosomes consist of a small (40S) and a large (60S) subunit. The 40S small subunit contains 1 molecule of ribosomal RNA (18S rRNA) and at least 33 different proteins. The large 60S subunit contains 3 rRNA molecules (25S, 5.8S and 5S rRNA) and at least 46 different proteins.

The protein resides in the cytoplasm. Its subcellular location is the nucleus. Component of the ribosome, a large ribonucleoprotein complex responsible for the synthesis of proteins in the cell. The small ribosomal subunit (SSU) binds messenger RNAs (mRNAs) and translates the encoded message by selecting cognate aminoacyl-transfer RNA (tRNA) molecules. The large subunit (LSU) contains the ribosomal catalytic site termed the peptidyl transferase center (PTC), which catalyzes the formation of peptide bonds, thereby polymerizing the amino acids delivered by tRNAs into a polypeptide chain. The nascent polypeptides leave the ribosome through a tunnel in the LSU and interact with protein factors that function in enzymatic processing, targeting, and the membrane insertion of nascent chains at the exit of the ribosomal tunnel. The polypeptide is Small ribosomal subunit protein eS32A (rpl4101) (Schizosaccharomyces pombe (strain 972 / ATCC 24843) (Fission yeast)).